Here is a 158-residue protein sequence, read N- to C-terminus: Putative pre-16S rRNA nuclease (158 aa).

This sequence belongs to the YqgF nuclease family.

The protein localises to the cytoplasm. Could be a nuclease involved in processing of the 5'-end of pre-16S rRNA. This chain is Putative pre-16S rRNA nuclease, found in Acidiphilium cryptum (strain JF-5).